We begin with the raw amino-acid sequence, 724 residues long: Semaphorin-2A (724 aa).

The N-terminal stretch at 1 to 25 is a signal peptide; that stretch reads MSLLQLSPLLALLLLLCSSVSETAA. Positions 45–522 constitute a Sema domain; that stretch reads QGNNNYGKHG…TDHRIKQIDL (478 aa). N-linked (GlcNAc...) asparagine glycosylation occurs at Asn-95. A disulfide bond links Cys-118 and Cys-129. N-linked (GlcNAc...) asparagine glycosylation is found at Asn-163, Asn-190, Asn-229, and Asn-314. 2 disulfide bridges follow: Cys-291–Cys-399 and Cys-315–Cys-358. The N-linked (GlcNAc...) asparagine glycan is linked to Asn-401. 2 disulfides stabilise this stretch: Cys-525-Cys-541 and Cys-535-Cys-550. In terms of domain architecture, Ig-like C2-type spans 552–663; the sequence is PYELDLLQDV…LCSYNITVDA (112 aa). N-linked (GlcNAc...) asparagine glycosylation is present at Asn-563. A disulfide bond links Cys-590 and Cys-647. N-linked (GlcNAc...) asparagine glycosylation is found at Asn-658, Asn-670, and Asn-708.

This sequence belongs to the semaphorin family. In terms of assembly, interacts with PlexB. In terms of tissue distribution, transiently expressed by a single large muscle during motoneuron outgrowth and synapse formation.

The protein resides in the secreted. Ligand for transmembrane receptor PlexB. Plays a role in growth cone guidance. Required for both proper adult behavior and survival. Can function as a selective target-derived signal that inhibits the formation of specific synaptic terminal arbors. Function in neurons is essential for adult survival, motor neuron survival, and is important for climbing behavior and activity. During embryogenesis, plays an important role in correct salivary gland positioning. This chain is Semaphorin-2A, found in Drosophila melanogaster (Fruit fly).